Here is a 334-residue protein sequence, read N- to C-terminus: Protein NlpD/LppB homolog (334 aa).

The LysM domain maps to 89–133; that stretch reads IFYIVKSKDTMYSIAKNSGYNYHELSKFNSIKKPYKIIIGQKIWM.

Belongs to the E.coli NlpD/Haemophilus LppB family.

In Buchnera aphidicola subsp. Acyrthosiphon pisum (strain APS) (Acyrthosiphon pisum symbiotic bacterium), this protein is Protein NlpD/LppB homolog.